The following is a 27-amino-acid chain: Conotoxin Bt9.2 (27 aa).

Disulfide bonds link cysteine 2/cysteine 16, cysteine 6/cysteine 19, and cysteine 12/cysteine 24. At proline 13 the chain carries 4-hydroxyproline.

In terms of tissue distribution, expressed by the venom duct.

The protein resides in the secreted. Functionally, probable neurotoxin that inhibits ion channels. The polypeptide is Conotoxin Bt9.2 (Conus betulinus (Beech cone)).